The sequence spans 1132 residues: Phytochrome B (1132 aa).

Residues 1 to 11 (MASGSRTKHSH) show a composition bias toward basic residues. The segment at 1–27 (MASGSRTKHSHQSGQGQVQAQSSGTSN) is disordered. Positions 12-26 (QSGQGQVQAQSSGTS) are enriched in low complexity. Positions 231–409 (DVKLLCDTVV…AFGLQLNMEL (179 aa)) constitute a GAF domain. Cysteine 336 provides a ligand contact to phytochromobilin. 2 PAS domains span residues 623 to 694 (VARE…LRGE) and 757 to 828 (DYKA…MIVL). The 221-residue stretch at 905–1125 (YLCQEIKSPL…LIILDLPMTR (221 aa)) folds into the Histidine kinase domain.

The protein belongs to the phytochrome family. As to quaternary structure, homodimer. Contains one covalently linked phytochromobilin chromophore.

Its function is as follows. Regulatory photoreceptor which exists in two forms that are reversibly interconvertible by light: the Pr form that absorbs maximally in the red region of the spectrum and the Pfr form that absorbs maximally in the far-red region. Photoconversion of Pr to Pfr induces an array of morphogenic responses, whereas reconversion of Pfr to Pr cancels the induction of those responses. Pfr controls the expression of a number of nuclear genes including those encoding the small subunit of ribulose-bisphosphate carboxylase, chlorophyll A/B binding protein, protochlorophyllide reductase, rRNA, etc. It also controls the expression of its own gene(s) in a negative feedback fashion. The polypeptide is Phytochrome B (PHYB) (Nicotiana tabacum (Common tobacco)).